The primary structure comprises 719 residues: ATP-dependent RNA helicase p62 (719 aa).

Residues 94–234 form a disordered region; the sequence is AQSQRAFRDS…GSQDLPMRPV (141 aa). Composition is skewed to basic and acidic residues over residues 99–108 and 137–171; these read AFRDSSKPDS and EEIKIEGVMAPHDRDFGHSGRGGRGGDRGGDDRRG. Gly residues predominate over residues 172–188; it reads GGGGGNRFGGGGGGGDY. Positions 194–205 are enriched in basic and acidic residues; it reads GRVEKRRDDRGG. Gly residues predominate over residues 206-226; that stretch reads GNRFGGGGGFGDRRGGGGGGS. Positions 281 to 309 match the Q motif motif; sequence QDFSEVHLPDYVMKEIRRQGYKAPTAIQA. In terms of domain architecture, Helicase ATP-binding spans 312-487; that stretch reads WPIAMSGSNF…EDFLGNYIQI (176 aa). 325–332 serves as a coordination point for ATP; sequence AKTGSGKT. Residues 435-438 carry the DEAD box motif; the sequence is DEAD. In terms of domain architecture, Helicase C-terminal spans 519 to 664; that stretch reads LLSDIYDTSE…EINPALENLA (146 aa). Positions 689–719 are disordered; it reads GGGFKKGSLSNGRGFGGGGGGGGEGRHSRFD. The span at 701 to 711 shows a compositional bias: gly residues; that stretch reads RGFGGGGGGGG.

Belongs to the DEAD box helicase family. DDX5/DBP2 subfamily. Interacts with Fmr1 to form the RNA-induced silencing complex (RISC), a ribonucleoprotein (RNP) complex involved in translation regulation, other components of the complex are RpL5, RpL11, AGO2 and Dcr-1.

The protein resides in the nucleus. It is found in the nucleolus. It localises to the cytoplasm. Its subcellular location is the cytosol. The enzyme catalyses ATP + H2O = ADP + phosphate + H(+). As an RNA helicase, unwinds RNA and alters RNA structures through ATP binding and hydrolysis. Involved in multiple cellular processes, including pre-mRNA splicing, alternative splicing, rRNA processing and miRNA processing, as well as transcription regulation. Plays a role in innate immunity. Specifically restricts bunyavirus infection, including Rift Valley fever virus (RVFV) or La Crosse virus (LACV), but not vesicular stomatitis virus (VSV), in an interferon- and DROSHA-independent manner. The chain is ATP-dependent RNA helicase p62 (Rm62) from Drosophila melanogaster (Fruit fly).